A 365-amino-acid polypeptide reads, in one-letter code: Outer membrane lipoprotein A (365 aa).

Positions 1–19 are cleaved as a signal peptide; it reads MNIATKLMASLVASVVLTA. The segment at 19–121 is disordered; that stretch reads ACSGGGSSGS…KGEELSKDKS (103 aa). Cys20 carries the N-palmitoyl cysteine lipid modification. Residue Cys20 is the site of S-diacylglycerol cysteine attachment. 2 stretches are compositionally biased toward basic and acidic residues: residues 48-68 and 105-121; these read EQPK…EPKE and NPQK…KDKS.

It is found in the cell outer membrane. This chain is Outer membrane lipoprotein A (omlA), found in Actinobacillus pleuropneumoniae (Haemophilus pleuropneumoniae).